Here is a 555-residue protein sequence, read N- to C-terminus: uncharacterized protein (555 aa).

Residues 1-83 (MSNEDETTRL…GRRKLLCLYG (83 aa)) are Extracellular-facing. Residues 84–104 (LVMIICIAESISMTATIPLVM) form a helical membrane-spanning segment. At 105-125 (DKVAEGISDENGHYDSVAVQT) the chain is on the cytoplasmic side. Residues 126 to 146 (IVSSISSSTMMIAGAISIFMA) form a helical membrane-spanning segment. Residues 147–188 (GKWGELSDRIGRVRVFKYMSGIRVIGLLTHVFTLSSKMKYHK) lie on the Extracellular side of the membrane. A helical membrane pass occupies residues 189–209 (WAIVLTACIVPSFGGLFALVA). The Cytoplasmic segment spans residues 210 to 229 (NGNSYVSDIVKTEHRMVTIG). A helical transmembrane segment spans residues 230–250 (IMMSCIYATMGVGPMFGSFLV). The Extracellular portion of the chain corresponds to 251–257 (KWTHGNG). Residues 258–278 (FIPIYTSIAFVILALIICETI) form a helical membrane-spanning segment. The Cytoplasmic portion of the chain corresponds to 279-356 (MVEPRHETQM…LVPRHTVILL (78 aa)). Positions 289–311 (AHSQSTYTKRREKLRSQSGSDDA) are disordered. The chain crosses the membrane as a helical span at residues 357-377 (IVLDILFVCGTTSCMPALILF). Residues 378–386 (STYEYKWHA) are Extracellular-facing. A helical membrane pass occupies residues 387–407 (VELGYFISILGIGRGVVLLVV). Residues 408–428 (SPTLLYTLKRIYQHLNHSIDK) lie on the Cytoplasmic side of the membrane. The helical transmembrane segment at 429–449 (IDIFCIQFSMIVITLSLFVMI) threads the bilayer. Over 450 to 459 (RFGEKTPTSM) the chain is Extracellular. Residues 460–480 (IIFALLQALSAFCSPTLQSGI) traverse the membrane as a helical segment. Over 481-491 (IKYTSKKHTGE) the chain is Cytoplasmic. A helical transmembrane segment spans residues 492-512 (MFGAMALVRSCVMLVIPPILL). Residues 513 to 523 (KLYGSTVSVNP) lie on the Extracellular side of the membrane. The helical transmembrane segment at 524–544 (SLFMYIPFSTSIVAILLTFFL) threads the bilayer. Residues 545–555 (RIYKNPPLDGP) are Cytoplasmic-facing.

It localises to the membrane. This is an uncharacterized protein from Saccharomyces cerevisiae (strain ATCC 204508 / S288c) (Baker's yeast).